Consider the following 498-residue polypeptide: MPSVQIRSSPSHSQPAMTVTDLKQRVIACLNRLSDRDTLALAAAELDSIALNLSPETFSLFINCLQSTDSSAKSPVRKHCVSLLSVLSRSHGDSLAPHLSKMVSTVLRRLRDPDSSVRAACVAASVDMTTNITGQPFSILFGPMIETVIHDCDPNAQISAAMCLAAAVDAADEPDVEQLQKALPKIGKLLKSEGFKAKAELLGAIGTVIGAVGGRNSEKAVLDWLLPNVSEFLSSDDWRARKAAAEAMARVAMVEEELAPLYKKTCLGILESRRFDKVKLVRETMNRTLGLWKQLEGDSTEVSESSSSSKSASSGLSATSGKRSNTLKGKDRNLNTPLSSKSNDVEPLDRGDTPKDVEQEAVVSKEKRNRSTLGAKRVLFPAKMHKVKENGSNKSQVVQSSDEESPKTDSGSSSSSQAKSNAEELSLIRHQITQIEKQQSSLLDLFQKFMESSHNGMQSLERRVRGLETSFSVISTDLLVSRSITQNGNHKRNACRQN.

HEAT repeat units follow at residues Glu56–Asp93, Pro97–Gly134, Pro136–Glu173, Glu177–Gly214, and Lys219–Glu257. A disordered region spans residues Glu296–Glu423. Positions Thr300–Lys322 are enriched in low complexity. The segment covering Asn343–Glu366 has biased composition (basic and acidic residues). Polar residues predominate over residues Asn390–Ser400. A Phosphoserine modification is found at Ser426.

The protein is TORTIFOLIA1-like protein 5 of Arabidopsis thaliana (Mouse-ear cress).